A 200-amino-acid chain; its full sequence is ATP-dependent Clp protease proteolytic subunit (200 aa).

Ser98 serves as the catalytic Nucleophile. His123 is an active-site residue.

It belongs to the peptidase S14 family. Fourteen ClpP subunits assemble into 2 heptameric rings which stack back to back to give a disk-like structure with a central cavity, resembling the structure of eukaryotic proteasomes.

The protein localises to the cytoplasm. The enzyme catalyses Hydrolysis of proteins to small peptides in the presence of ATP and magnesium. alpha-casein is the usual test substrate. In the absence of ATP, only oligopeptides shorter than five residues are hydrolyzed (such as succinyl-Leu-Tyr-|-NHMec, and Leu-Tyr-Leu-|-Tyr-Trp, in which cleavage of the -Tyr-|-Leu- and -Tyr-|-Trp bonds also occurs).. In terms of biological role, cleaves peptides in various proteins in a process that requires ATP hydrolysis. Has a chymotrypsin-like activity. Plays a major role in the degradation of misfolded proteins. The sequence is that of ATP-dependent Clp protease proteolytic subunit from Deinococcus geothermalis (strain DSM 11300 / CIP 105573 / AG-3a).